The chain runs to 126 residues: Fluoride-specific ion channel FluC (126 aa).

Helical transmembrane passes span 33–53 (LPLNVLIVNVIGAFILGVFIV), 64–84 (YSLFAAIGFCGSLTTMSSFAL), and 96–116 (GALAANIIVNVGLSIGALIGG). Residues glycine 74 and threonine 77 each coordinate Na(+).

The protein belongs to the fluoride channel Fluc/FEX (TC 1.A.43) family.

The protein localises to the cell membrane. It carries out the reaction fluoride(in) = fluoride(out). Its activity is regulated as follows. Na(+) is not transported, but it plays an essential structural role and its presence is essential for fluoride channel function. Functionally, fluoride-specific ion channel. Important for reducing fluoride concentration in the cell, thus reducing its toxicity. This chain is Fluoride-specific ion channel FluC, found in Nitrosopumilus maritimus (strain SCM1).